Consider the following 322-residue polypeptide: Probable cell division protein WhiA (322 aa).

The H-T-H motif DNA-binding region spans 279 to 312 (SLKELGELWTPPVGKSGVNHRIRKIERLAEKLRS).

This sequence belongs to the WhiA family.

Its function is as follows. Involved in cell division and chromosome segregation. The sequence is that of Probable cell division protein WhiA from Desulforamulus reducens (strain ATCC BAA-1160 / DSM 100696 / MI-1) (Desulfotomaculum reducens).